The chain runs to 621 residues: Ubiquitin carboxyl-terminal hydrolase MINDY-2 (621 aa).

2 disordered regions span residues 1 to 106 (MESS…RGQY) and 119 to 179 (VGHE…LESF). Phosphoserine is present on S94. Low complexity predominate over residues 145 to 163 (AAGSEEPSSAGGLSSSCSD). C266 functions as the Nucleophile in the catalytic mechanism. The active-site Proton acceptor is the H448. The ubiquitin-binding domain (UBD) stretch occupies residues 507–559 (GQQDQIDQDYLMALSLQQEQQSQEINWEQIPEGISDLELAKKLQEEEDRRASQ). Residues 556–621 (RASQYYQEQE…EKEKNSCVIL (66 aa)) are disordered. Over residues 558-591 (SQYYQEQEQAAAAAAAASTQAQQGQPAQASPSSG) the composition is skewed to low complexity. Residues 597–621 (SERKRKEPREKDKEKEKEKNSCVIL) are compositionally biased toward basic and acidic residues.

Belongs to the MINDY deubiquitinase family. FAM63 subfamily.

It carries out the reaction Thiol-dependent hydrolysis of ester, thioester, amide, peptide and isopeptide bonds formed by the C-terminal Gly of ubiquitin (a 76-residue protein attached to proteins as an intracellular targeting signal).. Hydrolase that can remove 'Lys-48'-linked conjugated ubiquitin from proteins. Binds to polyubiquitin chains of different linkage types, including 'Lys-6', 'Lys-11', 'Lys-29', 'Lys-33', 'Lys-48' and 'Lys-63'. May play a regulatory role at the level of protein turnover. In Homo sapiens (Human), this protein is Ubiquitin carboxyl-terminal hydrolase MINDY-2.